The chain runs to 239 residues: Probable transcriptional regulatory protein ABO_1803 (239 aa).

It belongs to the TACO1 family.

Its subcellular location is the cytoplasm. In Alcanivorax borkumensis (strain ATCC 700651 / DSM 11573 / NCIMB 13689 / SK2), this protein is Probable transcriptional regulatory protein ABO_1803.